The following is a 520-amino-acid chain: Protein U4 (520 aa).

The protein belongs to the herpesviridae U4 family.

The polypeptide is Protein U4 (Elephantid herpesvirus 1 (isolate Asian elephant/Berlin/Kiba/1998) (EIHV-1)).